The following is a 232-amino-acid chain: Secreted LysM effector Mg3LysM (232 aa).

Positions 1–16 (MQNIFLAATLLGAAFA) are cleaved as a signal peptide. Residues 47 to 91 (TNYTVKAGDTLGAIAKQYNSGVCDIAKVNGIDNPDYIKPDQVLSI) form the LysM 1 domain. N-linked (GlcNAc...) asparagine glycosylation is found at Asn-48, Asn-100, Asn-138, Asn-195, Asn-209, and Asn-227. LysM domains are found at residues 120–165 (STYT…VINT) and 177–221 (GTYV…IIIL).

This sequence belongs to the secreted LysM effector family.

Functionally, secreted effector that enables the plant pathogenic fungus to manipulate host defenses for successful infection. Binds chitin fragments and blocks the activation of chitin-induced plant defense responses. Protects fungal hyphae against hydrolytic plant enzymes. The sequence is that of Secreted LysM effector Mg3LysM from Zymoseptoria tritici (strain CBS 115943 / IPO323) (Speckled leaf blotch fungus).